A 128-amino-acid chain; its full sequence is Fluoride-specific ion channel FluC (128 aa).

4 consecutive transmembrane segments (helical) span residues 5-25 (IVAI…LALA), 35-55 (LGTL…AVVF), 67-87 (LFVI…SVEV), and 96-116 (FGWA…LTAL). Na(+)-binding residues include G75 and T78.

The protein belongs to the fluoride channel Fluc/FEX (TC 1.A.43) family.

It localises to the cell inner membrane. It catalyses the reaction fluoride(in) = fluoride(out). Na(+) is not transported, but it plays an essential structural role and its presence is essential for fluoride channel function. Its function is as follows. Fluoride-specific ion channel. Important for reducing fluoride concentration in the cell, thus reducing its toxicity. The protein is Fluoride-specific ion channel FluC of Burkholderia ambifaria (strain MC40-6).